Here is a 692-residue protein sequence, read N- to C-terminus: Single-strand DNA endonuclease ASTE1 (692 aa).

Belongs to the asteroid family.

In terms of biological role, structure-specific DNA endonuclease that specifically cleaves single-stranded DNA and 3' overhang DNA. This Danio rerio (Zebrafish) protein is Single-strand DNA endonuclease ASTE1 (aste1a).